Reading from the N-terminus, the 515-residue chain is RNA-splicing ligase RtcB homolog (515 aa).

The Mn(2+) site is built by Asp129, Cys132, His237, His269, and His363. 236–240 (NHYAE) is a binding site for GMP. GMP contacts are provided by residues 363–364 (HN), 412–415 (GGTM), Ser419, 438–441 (HGAG), and Lys514. Residue His438 is the GMP-histidine intermediate of the active site.

This sequence belongs to the RtcB family. As to quaternary structure, catalytic component of the tRNA-splicing ligase complex. The cofactor is Mn(2+).

The enzyme catalyses a 3'-end 3'-phospho-ribonucleotide-RNA + a 5'-end dephospho-ribonucleoside-RNA + GTP = a ribonucleotidyl-ribonucleotide-RNA + GMP + diphosphate. It carries out the reaction a 3'-end 2',3'-cyclophospho-ribonucleotide-RNA + a 5'-end dephospho-ribonucleoside-RNA + GTP + H2O = a ribonucleotidyl-ribonucleotide-RNA + GMP + diphosphate + H(+). Its function is as follows. Catalytic subunit of the tRNA-splicing ligase complex that acts by directly joining spliced tRNA halves to mature-sized tRNAs by incorporating the precursor-derived splice junction phosphate into the mature tRNA as a canonical 3',5'-phosphodiester. May act as an RNA ligase with broad substrate specificity, and may function toward other RNAs. The protein is RNA-splicing ligase RtcB homolog of Ostreococcus tauri.